The sequence spans 197 residues: MGGLKRKHSDLEEEEEEEKWDWSPTALRSYQQALLRISLDKVQRSLGPRAPSLRRHVLIHNTLQQLQAAIRLAPAPALPPEPLFLGEEDFSLSTTIGSILRELDTSMDEMEPPLNPAASSSPQNEIVSQADPVFLEALSSRYLGDSGLDDFFLDIDTSAVEKDVALPPPEPPHSLFCSPGSWEWNELDHIMEIILGS.

The tract at residues 1–23 (MGGLKRKHSDLEEEEEEEKWDWS) is disordered. The SERTA domain maps to 27–74 (LRSYQQALLRISLDKVQRSLGPRAPSLRRHVLIHNTLQQLQAAIRLAP).

Interacts with RPA2.

The protein localises to the nucleus. The protein resides in the nucleolus. In terms of biological role, antiviral interferon-stimulated protein that plays a role in innate immunity and in the suppression of viruses through different mechanisms. Plays a role in the late phase response of TLR-induced immune effector expression. Strong transcriptional coactivator. This Mus musculus (Mouse) protein is SERTA domain-containing protein 3 (Sertad3).